We begin with the raw amino-acid sequence, 702 residues long: Pentatricopeptide repeat-containing protein At4g16390, chloroplastic (702 aa).

Residues 1-53 constitute a chloroplast transit peptide; sequence MSFHHLCSSPSSLLHDPLPLCNLLSVYPKSTPRSFLSSYNPNSSHFHSRNLLQ. PPR repeat units lie at residues 174 to 208, 209 to 243, 244 to 278, 279 to 313, 314 to 348, 349 to 383, 384 to 414, 420 to 454, and 455 to 489; these read EVIL…GIKP, DNAT…GCEP, DNVT…KWRI, DAVT…GVKP, NLVI…GFTP, NWST…GLSL, TVIL…MKNC, DSWT…GFEP, and TLFV…GITP. The Smr domain maps to 603–688; sequence LHLKSLSLGA…WFLTTSVAAK (86 aa).

It belongs to the PPR family. P subfamily. In terms of tissue distribution, expressed in leaves and flowers and at lower levels in stems and flower buds.

It is found in the plastid. It localises to the chloroplast. Functionally, involved in chloroplast RNA processing. Can bind RNA. Involved in chloroplast development. Involved in chloroplast ribosomal RNA (rRNA) processing and/or translation. Required for FtsH-mediated chloroplast biogenesis. Involved in translation and accumulation of chloroplast ATP synthase subunits. The sequence is that of Pentatricopeptide repeat-containing protein At4g16390, chloroplastic from Arabidopsis thaliana (Mouse-ear cress).